The primary structure comprises 210 residues: Dephospho-CoA kinase (210 aa).

The region spanning 4–202 is the DPCK domain; it reads WVGLTGGIGS…AFYSGIFASK (199 aa). Position 12–17 (12–17) interacts with ATP; it reads GSGKSA.

This sequence belongs to the CoaE family.

Its subcellular location is the cytoplasm. The catalysed reaction is 3'-dephospho-CoA + ATP = ADP + CoA + H(+). It participates in cofactor biosynthesis; coenzyme A biosynthesis; CoA from (R)-pantothenate: step 5/5. In terms of biological role, catalyzes the phosphorylation of the 3'-hydroxyl group of dephosphocoenzyme A to form coenzyme A. This is Dephospho-CoA kinase from Neisseria gonorrhoeae (strain ATCC 700825 / FA 1090).